Reading from the N-terminus, the 327-residue chain is Aspartate carbamoyltransferase catalytic subunit (327 aa).

The carbamoyl phosphate site is built by Arg-67 and Thr-68. Lys-95 provides a ligand contact to L-aspartate. Carbamoyl phosphate contacts are provided by Arg-117, His-145, and Gln-148. The L-aspartate site is built by Arg-178 and Arg-232. Carbamoyl phosphate-binding residues include Gly-273 and Pro-274.

Belongs to the aspartate/ornithine carbamoyltransferase superfamily. ATCase family. Heterododecamer (2C3:3R2) of six catalytic PyrB chains organized as two trimers (C3), and six regulatory PyrI chains organized as three dimers (R2).

It carries out the reaction carbamoyl phosphate + L-aspartate = N-carbamoyl-L-aspartate + phosphate + H(+). It functions in the pathway pyrimidine metabolism; UMP biosynthesis via de novo pathway; (S)-dihydroorotate from bicarbonate: step 2/3. In terms of biological role, catalyzes the condensation of carbamoyl phosphate and aspartate to form carbamoyl aspartate and inorganic phosphate, the committed step in the de novo pyrimidine nucleotide biosynthesis pathway. The chain is Aspartate carbamoyltransferase catalytic subunit from Parvibaculum lavamentivorans (strain DS-1 / DSM 13023 / NCIMB 13966).